Here is a 383-residue protein sequence, read N- to C-terminus: 8-amino-7-oxononanoate synthase (383 aa).

Arginine 21 is a substrate binding site. 108-109 (GY) contributes to the pyridoxal 5'-phosphate binding site. Residue histidine 133 participates in substrate binding. Residues serine 179, histidine 207, and threonine 233 each contribute to the pyridoxal 5'-phosphate site. Position 236 is an N6-(pyridoxal phosphate)lysine (lysine 236). Residue threonine 350 coordinates substrate.

This sequence belongs to the class-II pyridoxal-phosphate-dependent aminotransferase family. BioF subfamily. As to quaternary structure, homodimer. Pyridoxal 5'-phosphate serves as cofactor.

The enzyme catalyses 6-carboxyhexanoyl-[ACP] + L-alanine + H(+) = (8S)-8-amino-7-oxononanoate + holo-[ACP] + CO2. Its pathway is cofactor biosynthesis; biotin biosynthesis. Catalyzes the decarboxylative condensation of pimeloyl-[acyl-carrier protein] and L-alanine to produce 8-amino-7-oxononanoate (AON), [acyl-carrier protein], and carbon dioxide. This chain is 8-amino-7-oxononanoate synthase, found in Yersinia pseudotuberculosis serotype IB (strain PB1/+).